A 360-amino-acid chain; its full sequence is Phosphoserine aminotransferase (360 aa).

Residue Arg-41 participates in L-glutamate binding. The pyridoxal 5'-phosphate site is built by Trp-101, Thr-152, Asp-172, and Gln-195. An N6-(pyridoxal phosphate)lysine modification is found at Lys-196. Position 237–238 (Asn-237–Thr-238) interacts with pyridoxal 5'-phosphate.

It belongs to the class-V pyridoxal-phosphate-dependent aminotransferase family. SerC subfamily. Homodimer. Requires pyridoxal 5'-phosphate as cofactor.

The protein localises to the cytoplasm. The enzyme catalyses O-phospho-L-serine + 2-oxoglutarate = 3-phosphooxypyruvate + L-glutamate. It carries out the reaction 4-(phosphooxy)-L-threonine + 2-oxoglutarate = (R)-3-hydroxy-2-oxo-4-phosphooxybutanoate + L-glutamate. It participates in amino-acid biosynthesis; L-serine biosynthesis; L-serine from 3-phospho-D-glycerate: step 2/3. It functions in the pathway cofactor biosynthesis; pyridoxine 5'-phosphate biosynthesis; pyridoxine 5'-phosphate from D-erythrose 4-phosphate: step 3/5. Catalyzes the reversible conversion of 3-phosphohydroxypyruvate to phosphoserine and of 3-hydroxy-2-oxo-4-phosphonooxybutanoate to phosphohydroxythreonine. The chain is Phosphoserine aminotransferase from Burkholderia lata (strain ATCC 17760 / DSM 23089 / LMG 22485 / NCIMB 9086 / R18194 / 383).